We begin with the raw amino-acid sequence, 246 residues long: Ribonuclease PH (246 aa).

Residues arginine 91 and 129-131 each bind phosphate; that span reads GTR.

This sequence belongs to the RNase PH family. Homohexameric ring arranged as a trimer of dimers.

The catalysed reaction is tRNA(n+1) + phosphate = tRNA(n) + a ribonucleoside 5'-diphosphate. Functionally, phosphorolytic 3'-5' exoribonuclease that plays an important role in tRNA 3'-end maturation. Removes nucleotide residues following the 3'-CCA terminus of tRNAs; can also add nucleotides to the ends of RNA molecules by using nucleoside diphosphates as substrates, but this may not be physiologically important. Probably plays a role in initiation of 16S rRNA degradation (leading to ribosome degradation) during starvation. The sequence is that of Ribonuclease PH from Paraburkholderia phymatum (strain DSM 17167 / CIP 108236 / LMG 21445 / STM815) (Burkholderia phymatum).